The chain runs to 152 residues: Nucleoside diphosphate kinase (152 aa).

Residues K10, F58, R86, T92, R103, and N113 each coordinate ATP. Residue H116 is the Pros-phosphohistidine intermediate of the active site.

Belongs to the NDK family. Requires Mg(2+) as cofactor.

It localises to the cytoplasm. It catalyses the reaction a 2'-deoxyribonucleoside 5'-diphosphate + ATP = a 2'-deoxyribonucleoside 5'-triphosphate + ADP. It carries out the reaction a ribonucleoside 5'-diphosphate + ATP = a ribonucleoside 5'-triphosphate + ADP. Functionally, major role in the synthesis of nucleoside triphosphates other than ATP. The ATP gamma phosphate is transferred to the NDP beta phosphate via a ping-pong mechanism, using a phosphorylated active-site intermediate. In Methanosphaera stadtmanae (strain ATCC 43021 / DSM 3091 / JCM 11832 / MCB-3), this protein is Nucleoside diphosphate kinase.